The sequence spans 353 residues: Endophilin-A3 (353 aa).

The interval 1-21 (MSVAGLKKQFHKASQLFSEKI) is membrane-binding amphipathic helix. The BAR domain occupies 18-249 (SEKISGAEGT…LQNRINVASS (232 aa)). A required for dimerization upon membrane association region spans residues 60-87 (PNPAYRAKLGMLNTMSKIRGQVKTTGYP). Residues 180 to 201 (DEEVKQAVEKFEESKELAERSM) are a coiled coil. Residues 218–254 (FVEAALDYHKQSTEILEDLQSKLQNRINVASSRPKRE) form an interaction with ARC region. The 60-residue stretch at 291–350 (VDQPCCQALYDFEPENEGELGFKEGDIITLTNQIDENWYEGMLNGESGFFPHNYVEVMVP) folds into the SH3 domain.

It belongs to the endophilin family. Interacts with ARC. Interacts with SYNJ1 and DNM1. As to expression, highest level in a region associated with endocytosis of yolk proteins in developing oocytes (at protein level). Highest level in small ovarian follicles. High levels in brain and testis. Lower level in adrenal glands.

The protein resides in the cytoplasm. It is found in the early endosome membrane. Implicated in endocytosis. May recruit other proteins to membranes with high curvature. Implicated in endocytosis of yolk proteins during oogenesis. The polypeptide is Endophilin-A3 (Gallus gallus (Chicken)).